Here is a 167-residue protein sequence, read N- to C-terminus: Crossover junction endodeoxyribonuclease RuvC (167 aa).

Catalysis depends on residues aspartate 11, glutamate 71, and aspartate 143. Aspartate 11, glutamate 71, and aspartate 143 together coordinate Mg(2+).

This sequence belongs to the RuvC family. Homodimer which binds Holliday junction (HJ) DNA. The HJ becomes 2-fold symmetrical on binding to RuvC with unstacked arms; it has a different conformation from HJ DNA in complex with RuvA. In the full resolvosome a probable DNA-RuvA(4)-RuvB(12)-RuvC(2) complex forms which resolves the HJ. It depends on Mg(2+) as a cofactor.

It is found in the cytoplasm. The catalysed reaction is Endonucleolytic cleavage at a junction such as a reciprocal single-stranded crossover between two homologous DNA duplexes (Holliday junction).. Its function is as follows. The RuvA-RuvB-RuvC complex processes Holliday junction (HJ) DNA during genetic recombination and DNA repair. Endonuclease that resolves HJ intermediates. Cleaves cruciform DNA by making single-stranded nicks across the HJ at symmetrical positions within the homologous arms, yielding a 5'-phosphate and a 3'-hydroxyl group; requires a central core of homology in the junction. The consensus cleavage sequence is 5'-(A/T)TT(C/G)-3'. Cleavage occurs on the 3'-side of the TT dinucleotide at the point of strand exchange. HJ branch migration catalyzed by RuvA-RuvB allows RuvC to scan DNA until it finds its consensus sequence, where it cleaves and resolves the cruciform DNA. This chain is Crossover junction endodeoxyribonuclease RuvC, found in Bartonella bacilliformis (strain ATCC 35685 / KC583 / Herrer 020/F12,63).